A 210-amino-acid polypeptide reads, in one-letter code: Signal peptidase complex catalytic subunit SEC11 (210 aa).

Over 1-21 the chain is Cytoplasmic; that stretch reads MLAGLSPHLSNLRRSLTQVLN. The helical; Signal-anchor for type II membrane protein transmembrane segment at 22–38 threads the bilayer; the sequence is FALVLSTAFMMWKGLSI. Topologically, residues 39–210 are lumenal; it reads YTNSSSPIVV…MGAMVILQRE (172 aa). Residue asparagine 41 is glycosylated (N-linked (GlcNAc...) asparagine). Active-site charge relay system residues include serine 53, histidine 92, and aspartate 152. A C-terminal short (CTS) helix region spans residues 196-207; that stretch reads VLLGIMGAMVIL.

This sequence belongs to the peptidase S26B family. As to quaternary structure, component of the signal peptidase complex (SPC) composed of a catalytic subunit SEC11 and three accessory subunits SPC1, SPC2 and SPC3. The complex induces a local thinning of the ER membrane which is used to measure the length of the signal peptide (SP) h-region of protein substrates. This ensures the selectivity of the complex towards h-regions shorter than 18-20 amino acids. SPC associates with the translocon complex.

It localises to the endoplasmic reticulum membrane. It catalyses the reaction Cleavage of hydrophobic, N-terminal signal or leader sequences from secreted and periplasmic proteins.. Catalytic component of the signal peptidase complex (SPC) which catalyzes the cleavage of N-terminal signal sequences from nascent proteins as they are translocated into the lumen of the endoplasmic reticulum. Specifically cleaves N-terminal signal peptides that contain a hydrophobic alpha-helix (h-region) shorter than 18-20 amino acids. In Coccidioides posadasii (strain RMSCC 757 / Silveira) (Valley fever fungus), this protein is Signal peptidase complex catalytic subunit SEC11 (SEC11).